A 583-amino-acid chain; its full sequence is Pyruvate kinase isozyme A, chloroplastic (583 aa).

Residues 1-74 (MSQSLHFSPN…NSGVLYNNNN (74 aa)) constitute a chloroplast transit peptide. The segment covering 43–52 (KASTSPSSSS) has biased composition (low complexity). The interval 43 to 75 (KASTSPSSSSDPQVLVADNGTGNSGVLYNNNNK) is disordered. Residues 62–75 (GTGNSGVLYNNNNK) show a composition bias toward polar residues. Arg-134 contacts substrate. The K(+) site is built by Asn-136, Asp-168, and Thr-169. Residue 136-139 (NMCH) participates in ATP binding. Residue Glu-333 coordinates Mg(2+). Gly-356, Asp-357, and Ser-389 together coordinate substrate. Residue Asp-357 coordinates Mg(2+).

It belongs to the pyruvate kinase family. As to quaternary structure, oligomer of alpha and beta subunits. Mg(2+) serves as cofactor. Requires K(+) as cofactor.

The protein resides in the plastid. Its subcellular location is the chloroplast. It catalyses the reaction pyruvate + ATP = phosphoenolpyruvate + ADP + H(+). The protein operates within carbohydrate degradation; glycolysis; pyruvate from D-glyceraldehyde 3-phosphate: step 5/5. The sequence is that of Pyruvate kinase isozyme A, chloroplastic from Ricinus communis (Castor bean).